Reading from the N-terminus, the 250-residue chain is Isoprenyl transferase (250 aa).

Asp27 is an active-site residue. Asp27 serves as a coordination point for Mg(2+). Residues 28 to 31, Trp32, His48, and 76 to 78 each bind substrate; these read GNRR and STE. Asn79 functions as the Proton acceptor in the catalytic mechanism. Substrate contacts are provided by residues Phe80, Arg82, Arg199, and 205 to 207; that span reads RVS. Residue Glu218 participates in Mg(2+) binding.

The protein belongs to the UPP synthase family. In terms of assembly, homodimer. It depends on Mg(2+) as a cofactor.

Functionally, catalyzes the condensation of isopentenyl diphosphate (IPP) with allylic pyrophosphates generating different type of terpenoids. The protein is Isoprenyl transferase of Chlamydia abortus (strain DSM 27085 / S26/3) (Chlamydophila abortus).